The sequence spans 94 residues: Pyrimidine/purine nucleoside phosphorylase (94 aa).

The protein belongs to the nucleoside phosphorylase PpnP family.

It catalyses the reaction a purine D-ribonucleoside + phosphate = a purine nucleobase + alpha-D-ribose 1-phosphate. The enzyme catalyses adenosine + phosphate = alpha-D-ribose 1-phosphate + adenine. It carries out the reaction cytidine + phosphate = cytosine + alpha-D-ribose 1-phosphate. The catalysed reaction is guanosine + phosphate = alpha-D-ribose 1-phosphate + guanine. It catalyses the reaction inosine + phosphate = alpha-D-ribose 1-phosphate + hypoxanthine. The enzyme catalyses thymidine + phosphate = 2-deoxy-alpha-D-ribose 1-phosphate + thymine. It carries out the reaction uridine + phosphate = alpha-D-ribose 1-phosphate + uracil. The catalysed reaction is xanthosine + phosphate = alpha-D-ribose 1-phosphate + xanthine. Its function is as follows. Catalyzes the phosphorolysis of diverse nucleosides, yielding D-ribose 1-phosphate and the respective free bases. Can use uridine, adenosine, guanosine, cytidine, thymidine, inosine and xanthosine as substrates. Also catalyzes the reverse reactions. The polypeptide is Pyrimidine/purine nucleoside phosphorylase (Klebsiella pneumoniae (strain 342)).